The following is a 297-amino-acid chain: Streptogrisin-A (297 aa).

An N-terminal signal peptide occupies residues 1 to 38 (MTFKRFSPLSSTSRYARLLAVASGLVAAAALATPSAVA). The propeptide occupies 39-115 (APEAESKATV…VKRAEGKFTP (77 aa)). Cys130 and Cys150 are oxidised to a cystine. Active-site charge relay system residues include His149, Asp171, and Ser253. A disulfide bond links Cys247 and Cys274.

This sequence belongs to the peptidase S1 family. Monomer.

The catalysed reaction is Hydrolysis of proteins with specificity similar to chymotrypsin.. Has a primary specificity for large aliphatic or aromatic amino acids. This chain is Streptogrisin-A (sprA), found in Streptomyces griseus.